The following is a 387-amino-acid chain: Mannitol-1-phosphate 5-dehydrogenase (387 aa).

An NAD(+)-binding site is contributed by 3 to 14 (ALHFGAGNIGRG).

Belongs to the mannitol dehydrogenase family.

It catalyses the reaction D-mannitol 1-phosphate + NAD(+) = beta-D-fructose 6-phosphate + NADH + H(+). The chain is Mannitol-1-phosphate 5-dehydrogenase from Yersinia pseudotuberculosis serotype O:1b (strain IP 31758).